We begin with the raw amino-acid sequence, 193 residues long: Peptidyl-tRNA hydrolase (193 aa).

Tyr-17 is a binding site for tRNA. His-22 (proton acceptor) is an active-site residue. Residues Phe-68, Asn-70, and Asn-116 each contribute to the tRNA site.

Belongs to the PTH family. Monomer.

Its subcellular location is the cytoplasm. It carries out the reaction an N-acyl-L-alpha-aminoacyl-tRNA + H2O = an N-acyl-L-amino acid + a tRNA + H(+). Functionally, hydrolyzes ribosome-free peptidyl-tRNAs (with 1 or more amino acids incorporated), which drop off the ribosome during protein synthesis, or as a result of ribosome stalling. Its function is as follows. Catalyzes the release of premature peptidyl moieties from peptidyl-tRNA molecules trapped in stalled 50S ribosomal subunits, and thus maintains levels of free tRNAs and 50S ribosomes. The chain is Peptidyl-tRNA hydrolase from Acinetobacter baylyi (strain ATCC 33305 / BD413 / ADP1).